The sequence spans 664 residues: Intraflagellar transport protein 70B (664 aa).

TPR repeat units follow at residues 11-44 (DGEF…SSRS), 45-78 (RAGL…HPEL), 153-186 (YDGQ…SGYQ), 188-220 (DLSY…GIRQ), 385-418 (LTEQ…YDET), 423-456 (IPVL…CNDH), and 458-491 (VWKL…NYDN). Residues 507–534 (YIMTSQNEEAEELMRKIEKEEEQLSYGD) adopt a coiled-coil conformation. Residues 543–576 (CIVNLVIGTLYCAKGNYDFGISRVIKSLEPYHKK) form a TPR 8 repeat.

It belongs to the TTC30/dfy-1/fleer family. As to quaternary structure, interacts with the IFT B complex components IFT27, IFT46, IFT74, IFT52, IFT57, IFT80, IFT81 and IFT88. Interacts with KIF17.

The protein localises to the cell projection. Its subcellular location is the cilium. Its function is as follows. Required for polyglutamylation of axonemal tubulin. Plays a role in anterograde intraflagellar transport (IFT), the process by which cilia precursors are transported from the base of the cilium to the site of their incorporation at the tip. This chain is Intraflagellar transport protein 70B (Ift70b), found in Mus musculus (Mouse).